A 216-amino-acid polypeptide reads, in one-letter code: Pyrophosphatase PpaX (216 aa).

Asp9 serves as the catalytic Nucleophile.

It belongs to the HAD-like hydrolase superfamily. PpaX family. Mg(2+) serves as cofactor.

The enzyme catalyses diphosphate + H2O = 2 phosphate + H(+). Functionally, hydrolyzes pyrophosphate formed during P-Ser-HPr dephosphorylation by HPrK/P. Might play a role in controlling the intracellular pyrophosphate pool. The polypeptide is Pyrophosphatase PpaX (Bacillus cereus (strain G9842)).